A 280-amino-acid chain; its full sequence is Bifunctional protein FolD (280 aa).

Residues 164 to 166, Ser189, and Val230 contribute to the NADP(+) site; that span reads GRS.

The protein belongs to the tetrahydrofolate dehydrogenase/cyclohydrolase family. As to quaternary structure, homodimer.

The enzyme catalyses (6R)-5,10-methylene-5,6,7,8-tetrahydrofolate + NADP(+) = (6R)-5,10-methenyltetrahydrofolate + NADPH. The catalysed reaction is (6R)-5,10-methenyltetrahydrofolate + H2O = (6R)-10-formyltetrahydrofolate + H(+). Its pathway is one-carbon metabolism; tetrahydrofolate interconversion. Functionally, catalyzes the oxidation of 5,10-methylenetetrahydrofolate to 5,10-methenyltetrahydrofolate and then the hydrolysis of 5,10-methenyltetrahydrofolate to 10-formyltetrahydrofolate. The polypeptide is Bifunctional protein FolD (Geotalea daltonii (strain DSM 22248 / JCM 15807 / FRC-32) (Geobacter daltonii)).